Here is a 35-residue protein sequence, read N- to C-terminus: Photosystem II reaction center protein M (35 aa).

The helical transmembrane segment at 5–25 (ILAFIATALFIIIPTAFLLIL) threads the bilayer.

Belongs to the PsbM family. In terms of assembly, PSII is composed of 1 copy each of membrane proteins PsbA, PsbB, PsbC, PsbD, PsbE, PsbF, PsbH, PsbI, PsbJ, PsbK, PsbL, PsbM, PsbT, PsbX, PsbY, PsbZ, Psb30/Ycf12, at least 3 peripheral proteins of the oxygen-evolving complex and a large number of cofactors. It forms dimeric complexes.

It localises to the plastid. It is found in the chloroplast thylakoid membrane. In terms of biological role, one of the components of the core complex of photosystem II (PSII). PSII is a light-driven water:plastoquinone oxidoreductase that uses light energy to abstract electrons from H(2)O, generating O(2) and a proton gradient subsequently used for ATP formation. It consists of a core antenna complex that captures photons, and an electron transfer chain that converts photonic excitation into a charge separation. This subunit is found at the monomer-monomer interface. The polypeptide is Photosystem II reaction center protein M (Chara vulgaris (Common stonewort)).